We begin with the raw amino-acid sequence, 596 residues long: uncharacterized protein (596 aa).

A signal peptide spans 1–20 (MRYKPLLLALMLVFSTPAVA). 2 stretches are compositionally biased toward basic and acidic residues: residues 25–90 (AHNR…KEAT) and 161–184 (VRSD…NAKT). The interval 25 to 184 (AHNRSAEVKK…KYREEKNAKT (160 aa)) is disordered. Coiled-coil stretches lie at residues 177 to 281 (REEK…RFVS) and 318 to 454 (NREV…TAED).

The protein belongs to the peptidase M23B family.

This is an uncharacterized protein from Neisseria meningitidis serogroup B (strain ATCC BAA-335 / MC58).